Consider the following 352-residue polypeptide: C-X-C chemokine receptor type 4 (352 aa).

The tract at residues 1 to 21 (MEGISIYTSDNYSEELGSGDY) is important for chemokine binding and signaling. Residues 1-38 (MEGISIYTSDNYSEELGSGDYDSIKEPCFREENAHFNR) are Extracellular-facing. Tyrosine 7 carries the post-translational modification Sulfotyrosine. An N-linked (GlcNAc...) asparagine glycan is attached at asparagine 11. Position 12 is a sulfotyrosine (tyrosine 12). A glycan (O-linked (Xyl...) (chondroitin sulfate) serine) is linked at serine 18. Residue tyrosine 21 is modified to Sulfotyrosine. Disulfide bonds link cysteine 28–cysteine 274 and cysteine 109–cysteine 186. A helical membrane pass occupies residues 39 to 63 (IFLPTIYSIIFLTGIVGNGLVILVM). Residues 64–77 (GYQKKLRSMTDKYR) are Cytoplasmic-facing. A helical transmembrane segment spans residues 78–99 (LHLSVADLLFVITLPFWAVDAV). Positions 94-97 (WAVD) are chemokine binding. At 100 to 110 (ANWYFGNFLCK) the chain is on the extracellular side. The chain crosses the membrane as a helical span at residues 111–130 (AVHVIYTVNLYSSVLILAFI). The segment at 113-117 (HVIYT) is chemokine binding. Over 131 to 154 (SLDRYLAIVHATNSQRPRKLLAEK) the chain is Cytoplasmic. Positions 133–135 (DRY) match the Important for signaling motif. Residues 135–147 (YLAIVHATNSQRP) form an involved in dimerization; when bound to chemokine region. Residues 155–174 (VVYVGVWIPALLLTIPDFIF) form a helical membrane-spanning segment. At 175 to 195 (ANVSEAEDRYICDRFYPNDLW) the chain is on the extracellular side. A chemokine binding, important for signaling region spans residues 186-190 (CDRFY). The involved in dimerization stretch occupies residues 191-210 (PNDLWVVVFQFQHIMVGLIL). The chain crosses the membrane as a helical span at residues 196–216 (VVVFQFQHIMVGLILPGIVIL). Topologically, residues 217–241 (SCYCIIISKLSHSKGHQKRKALKTT) are cytoplasmic. Residues 242-261 (VILILAFFACWLPYYIGISI) form a helical membrane-spanning segment. Residues 262 to 282 (DSFILLEIIKQGCEFESTVHK) are Extracellular-facing. The involved in dimerization stretch occupies residues 266–268 (LLE). A helical transmembrane segment spans residues 283–302 (WISITEALAFFHCCLNPILY). Topologically, residues 303-352 (AFLGAKFKSSAQHALTSVSRGSSLKILSKGKRGGHSSVSTESESSSFHSS) are cytoplasmic. 2 positions are modified to phosphoserine: serine 319 and serine 321. Phosphoserine; by PKC and GRK6 is present on residues serine 324 and serine 325. The interval 329–352 (LSKGKRGGHSSVSTESESSSFHSS) is disordered. Serine 330 is subject to Phosphoserine; by GRK6. Lysine 331 is covalently cross-linked (Glycyl lysine isopeptide (Lys-Gly) (interchain with G-Cter in ubiquitin)). A compositionally biased stretch (low complexity) spans 337-352 (HSSVSTESESSSFHSS). Serine 339 carries the post-translational modification Phosphoserine; by GRK6. Phosphoserine occurs at positions 348 and 351.

It belongs to the G-protein coupled receptor 1 family. In terms of assembly, monomer. Can form homodimers. Interacts with CD164. Interacts with ARRB2; the interaction is dependent on the C-terminal phosphorylation of CXCR4 and allows activation of MAPK1 and MAPK3. Interacts with ARR3; the interaction is dependent on the C-terminal phosphorylation of CXCR4 and modulates calcium mobilization. Interacts with RNF113A; the interaction, enhanced by CXCL12, promotes CXCR4 ubiquitination and subsequent degradation. Interacts (via the cytoplasmic C-terminal) with ITCH (via the WW domains I and II); the interaction, enhanced by CXCL12, promotes CXCR4 ubiquitination and leads to its degradation. Interacts with extracellular ubiquitin. Interacts with DBN1; this interaction is enhanced by antigenic stimulation. Following LPS binding, may form a complex with GDF5, HSP90AA1 and HSPA8. In terms of processing, phosphorylated on agonist stimulation. Rapidly phosphorylated on serine and threonine residues in the C-terminal. Phosphorylation at Ser-324 and Ser-325 leads to recruitment of ITCH, ubiquitination and protein degradation. Ubiquitinated after ligand binding, leading to its degradation. Ubiquitinated by ITCH at the cell membrane on agonist stimulation. The ubiquitin-dependent mechanism, endosomal sorting complex required for transport (ESCRT), then targets CXCR4 for lysosomal degradation. This process is dependent also on prior Ser-/Thr-phosphorylation in the C-terminal of CXCR4. Also binding of ARRB1 to STAM negatively regulates CXCR4 sorting to lysosomes though modulating ubiquitination of SFR5S. Post-translationally, sulfation is required for efficient binding of CXCL12/SDF-1alpha and promotes its dimerization. In terms of processing, O- and N-glycosylated. N-glycosylation can mask coreceptor function. The O-glycosylation chondroitin sulfate attachment does not affect interaction with CXCL12/SDF-1alpha nor its coreceptor activity.

It is found in the cell membrane. The protein resides in the cell junction. It localises to the early endosome. The protein localises to the late endosome. Its subcellular location is the lysosome. Functionally, receptor for the C-X-C chemokine CXCL12/SDF-1 that transduces a signal by increasing intracellular calcium ion levels and enhancing MAPK1/MAPK3 activation. Involved in the AKT signaling cascade. Plays a role in regulation of cell migration, e.g. during wound healing. Acts as a receptor for extracellular ubiquitin; leading to enhanced intracellular calcium ions and reduced cellular cAMP levels. Binds bacterial lipopolysaccharide (LPS) et mediates LPS-induced inflammatory response, including TNF secretion by monocytes. Involved in hematopoiesis and in cardiac ventricular septum formation. Also plays an essential role in vascularization of the gastrointestinal tract, probably by regulating vascular branching and/or remodeling processes in endothelial cells. Involved in cerebellar development. In the CNS, could mediate hippocampal-neuron survival. The chain is C-X-C chemokine receptor type 4 (CXCR4) from Tupaia chinensis (Chinese tree shrew).